The chain runs to 256 residues: Small ribosomal subunit protein bS18m (256 aa).

Residues 19–106 (GQRTAQFSTT…GGQRYGSNSQ (88 aa)) are disordered. Residues 21–30 (RTAQFSTTSP) show a composition bias toward polar residues. Residues 44 to 66 (NAPRTNTNTSSPSSNNNNNAGSS) show a composition bias toward low complexity.

The protein belongs to the bacterial ribosomal protein bS18 family. As to quaternary structure, component of the mitochondrial small ribosomal subunit (mt-SSU). Mature N.crassa 74S mitochondrial ribosomes consist of a small (37S) and a large (54S) subunit. The 37S small subunit contains a 16S ribosomal RNA (16S mt-rRNA) and 32 different proteins. The 54S large subunit contains a 23S rRNA (23S mt-rRNA) and 42 different proteins.

It localises to the mitochondrion. In terms of biological role, component of the mitochondrial ribosome (mitoribosome), a dedicated translation machinery responsible for the synthesis of mitochondrial genome-encoded proteins, including at least some of the essential transmembrane subunits of the mitochondrial respiratory chain. The mitoribosomes are attached to the mitochondrial inner membrane and translation products are cotranslationally integrated into the membrane. This chain is Small ribosomal subunit protein bS18m (rsm18), found in Neurospora crassa (strain ATCC 24698 / 74-OR23-1A / CBS 708.71 / DSM 1257 / FGSC 987).